Here is an 87-residue protein sequence, read N- to C-terminus: Toxin CngtIII (87 aa).

Positions 1–19 (MNSLLMITACLVLFGTVWA) are cleaved as a signal peptide. The 66-residue stretch at 20-85 (KEGYLVNKST…TYPLPNKTCS (66 aa)) folds into the LCN-type CS-alpha/beta domain. Disulfide bonds link Cys-31/Cys-84, Cys-35/Cys-60, Cys-44/Cys-65, and Cys-48/Cys-67.

This sequence belongs to the long (4 C-C) scorpion toxin superfamily. Sodium channel inhibitor family. Beta subfamily. In terms of tissue distribution, expressed by the venom gland.

The protein localises to the secreted. Functionally, beta toxins bind voltage-independently at site-4 of sodium channels (Nav) and shift the voltage of activation toward more negative potentials thereby affecting sodium channel activation and promoting spontaneous and repetitive firing. The sequence is that of Toxin CngtIII from Centruroides noxius (Mexican scorpion).